Reading from the N-terminus, the 414-residue chain is Alanine--glyoxylate aminotransferase (414 aa).

Residues 1-23 constitute a mitochondrion transit peptide; the sequence is MFRMLAKASVTLGSRAASWVRNM. The residue at position 231 (lysine 231) is an N6-(pyridoxal phosphate)lysine. N6-acetyllysine; alternate is present on lysine 247. At lysine 247 the chain carries N6-succinyllysine; alternate. 2 positions are modified to N6-acetyllysine: lysine 256 and lysine 334. A substrate-binding site is contributed by arginine 382. The Microbody targeting signal signature appears at 412–414; the sequence is NKL.

It belongs to the class-V pyridoxal-phosphate-dependent aminotransferase family. Homodimer. Pyridoxal 5'-phosphate is required as a cofactor.

Its subcellular location is the peroxisome. The protein resides in the mitochondrion matrix. It catalyses the reaction L-serine + pyruvate = 3-hydroxypyruvate + L-alanine. The enzyme catalyses glyoxylate + L-alanine = glycine + pyruvate. Functionally, catalyzes the transamination of glyoxylate to glycine and contributes to the glyoxylate detoxification. Catalyzes the transamination between L-serine and pyruvate and weakly contributes to gluconeogenesis from the L-serine metabolism. This chain is Alanine--glyoxylate aminotransferase, found in Rattus norvegicus (Rat).